The following is a 100-amino-acid chain: MELTPREKDKLLLASAGMIAERRKARGLKLNYPEAVALICFEIMEGARDGRTVADLMNYGRTILTADDVMEGVPEMIPDVQVECTFPDGTKLVSIHEPIV.

It belongs to the urease gamma subunit family. Heterotrimer of UreA (gamma), UreB (beta) and UreC (alpha) subunits. Three heterotrimers associate to form the active enzyme.

It localises to the cytoplasm. The catalysed reaction is urea + 2 H2O + H(+) = hydrogencarbonate + 2 NH4(+). It participates in nitrogen metabolism; urea degradation; CO(2) and NH(3) from urea (urease route): step 1/1. This Aliivibrio fischeri (strain ATCC 700601 / ES114) (Vibrio fischeri) protein is Urease subunit gamma.